The primary structure comprises 427 residues: UDP-N-acetylglucosamine 1-carboxyvinyltransferase 2 (427 aa).

19 to 20 (KN) provides a ligand contact to phosphoenolpyruvate. Arg91 serves as a coordination point for UDP-N-acetyl-alpha-D-glucosamine. Cys115 acts as the Proton donor in catalysis. Cys115 bears the 2-(S-cysteinyl)pyruvic acid O-phosphothioketal mark. Positions 307 and 329 each coordinate UDP-N-acetyl-alpha-D-glucosamine.

Belongs to the EPSP synthase family. MurA subfamily.

Its subcellular location is the cytoplasm. It carries out the reaction phosphoenolpyruvate + UDP-N-acetyl-alpha-D-glucosamine = UDP-N-acetyl-3-O-(1-carboxyvinyl)-alpha-D-glucosamine + phosphate. It participates in cell wall biogenesis; peptidoglycan biosynthesis. Cell wall formation. Adds enolpyruvyl to UDP-N-acetylglucosamine. This Prochlorococcus marinus (strain SARG / CCMP1375 / SS120) protein is UDP-N-acetylglucosamine 1-carboxyvinyltransferase 2.